A 509-amino-acid polypeptide reads, in one-letter code: Activin receptor type-1 (509 aa).

The signal sequence occupies residues 1–20 (MVDGVMILPVLMMMAFPSPS). The Extracellular segment spans residues 21–123 (VEDEKPKVNQ…FPGTQNFHLE (103 aa)). N-linked (GlcNAc...) asparagine glycosylation is present at N102. A helical membrane pass occupies residues 124 to 146 (VGLIILSVVFAVCLLACILGVAL). At 147-509 (RKFKRRNQER…NSLDKLKTDC (363 aa)) the chain is on the cytoplasmic side. The region spanning 178-207 (STLAELLDHSCTSGSGSGLPFLVQRTVARQ) is the GS domain. Residues 208–502 (ITLLECVGKG…KTLTKIDNSL (295 aa)) form the Protein kinase domain. Residues 214-222 (VGKGRYGEV) and K235 contribute to the ATP site. Catalysis depends on D336, which acts as the Proton acceptor. Residue S501 is modified to Phosphoserine.

Belongs to the protein kinase superfamily. TKL Ser/Thr protein kinase family. TGFB receptor subfamily. In terms of assembly, interacts with FKBP1A. Interacts with FCHO1. Interacts with CLU. Interacts with type II receptors AMHR2 and ACVR2A. Interacts with BMP7. Interacts with BMP9. Interacts with BMP6 (when glycosylated); the interaction may induce HAMP expression. Interacts with TSC22D1/TSC-22. Mg(2+) is required as a cofactor. It depends on Mn(2+) as a cofactor. In terms of tissue distribution, highly expressed in bone during developmental stages. Expressed in normal parenchymal cells, endothelial cells, fibroblasts and tumor-derived epithelial cells.

The protein resides in the membrane. The catalysed reaction is L-threonyl-[receptor-protein] + ATP = O-phospho-L-threonyl-[receptor-protein] + ADP + H(+). It carries out the reaction L-seryl-[receptor-protein] + ATP = O-phospho-L-seryl-[receptor-protein] + ADP + H(+). Its function is as follows. Bone morphogenetic protein (BMP) type I receptor that is involved in a wide variety of biological processes, including bone, heart, cartilage, nervous, and reproductive system development and regulation. As a type I receptor, forms heterotetrameric receptor complexes with the type II receptors AMHR2, ACVR2A ors ACVR2B. Upon binding of ligands such as BMP7 or BMP9 to the heteromeric complexes, type II receptors transphosphorylate ACVR1 intracellular domain. In turn, ACVR1 kinase domain is activated and subsequently phosphorylates SMAD1/5/8 proteins that transduce the signal. In addition to its role in mediating BMP pathway-specific signaling, suppresses TGFbeta/activin pathway signaling by interfering with the binding of activin to its type II receptor. Besides canonical SMAD signaling, can activate non-canonical pathways such as p38 mitogen-activated protein kinases/MAPKs. May promote the expression of HAMP, potentially via its interaction with BMP6. This is Activin receptor type-1 (Acvr1) from Mus musculus (Mouse).